Reading from the N-terminus, the 273-residue chain is Shikimate dehydrogenase (NADP(+)) (273 aa).

Residues serine 14–serine 16 and threonine 61 each bind shikimate. Lysine 65 serves as the catalytic Proton acceptor. Shikimate is bound by residues asparagine 86 and aspartate 102. NADP(+)-binding positions include glycine 126 to alanine 130, asparagine 150 to arginine 155, and methionine 213. Tyrosine 215 contacts shikimate. An NADP(+)-binding site is contributed by glycine 237.

Belongs to the shikimate dehydrogenase family. As to quaternary structure, homodimer.

The enzyme catalyses shikimate + NADP(+) = 3-dehydroshikimate + NADPH + H(+). It functions in the pathway metabolic intermediate biosynthesis; chorismate biosynthesis; chorismate from D-erythrose 4-phosphate and phosphoenolpyruvate: step 4/7. Involved in the biosynthesis of the chorismate, which leads to the biosynthesis of aromatic amino acids. Catalyzes the reversible NADPH linked reduction of 3-dehydroshikimate (DHSA) to yield shikimate (SA). In Aeromonas hydrophila subsp. hydrophila (strain ATCC 7966 / DSM 30187 / BCRC 13018 / CCUG 14551 / JCM 1027 / KCTC 2358 / NCIMB 9240 / NCTC 8049), this protein is Shikimate dehydrogenase (NADP(+)).